The sequence spans 218 residues: Protein-L-isoaspartate O-methyltransferase (218 aa).

S69 is an active-site residue.

The protein belongs to the methyltransferase superfamily. L-isoaspartyl/D-aspartyl protein methyltransferase family.

The protein localises to the cytoplasm. The catalysed reaction is [protein]-L-isoaspartate + S-adenosyl-L-methionine = [protein]-L-isoaspartate alpha-methyl ester + S-adenosyl-L-homocysteine. Its function is as follows. Catalyzes the methyl esterification of L-isoaspartyl residues in peptides and proteins that result from spontaneous decomposition of normal L-aspartyl and L-asparaginyl residues. It plays a role in the repair and/or degradation of damaged proteins. This chain is Protein-L-isoaspartate O-methyltransferase, found in Aromatoleum aromaticum (strain DSM 19018 / LMG 30748 / EbN1) (Azoarcus sp. (strain EbN1)).